Reading from the N-terminus, the 418-residue chain is Glucose-1-phosphate adenylyltransferase (418 aa).

Residues Y104, G169, 184 to 185, and S202 each bind alpha-D-glucose 1-phosphate; that span reads EK.

The protein belongs to the bacterial/plant glucose-1-phosphate adenylyltransferase family. Homotetramer.

The catalysed reaction is alpha-D-glucose 1-phosphate + ATP + H(+) = ADP-alpha-D-glucose + diphosphate. It participates in glycan biosynthesis; glycogen biosynthesis. Functionally, involved in the biosynthesis of ADP-glucose, a building block required for the elongation reactions to produce glycogen. Catalyzes the reaction between ATP and alpha-D-glucose 1-phosphate (G1P) to produce pyrophosphate and ADP-Glc. The sequence is that of Glucose-1-phosphate adenylyltransferase from Jannaschia sp. (strain CCS1).